We begin with the raw amino-acid sequence, 320 residues long: Methylenetetrahydrofolate dehydrogenase [NAD(+)] (320 aa).

Residue C150 is part of the active site. Residues 185 to 186 (RS), 208 to 209 (DV), and 274 to 276 (FAC) contribute to the NAD(+) site.

It belongs to the tetrahydrofolate dehydrogenase/cyclohydrolase family. In terms of assembly, homodimer. In terms of processing, the N-terminus is blocked.

It is found in the cytoplasm. It localises to the nucleus. It catalyses the reaction (6R)-5,10-methylene-5,6,7,8-tetrahydrofolate + NAD(+) = (6R)-5,10-methenyltetrahydrofolate + NADH. Functionally, catalyzes oxidation of cytoplasmic one-carbon units for purine biosynthesis. This Saccharomyces cerevisiae (strain ATCC 204508 / S288c) (Baker's yeast) protein is Methylenetetrahydrofolate dehydrogenase [NAD(+)] (MTD1).